The primary structure comprises 820 residues: Leucine--tRNA ligase (820 aa).

The short motif at 40–51 (PYPSGAGLHVGH) is the 'HIGH' region element. The 'KMSKS' region signature appears at 601–605 (KMSKS). Residue Lys-604 coordinates ATP.

The protein belongs to the class-I aminoacyl-tRNA synthetase family.

Its subcellular location is the cytoplasm. It catalyses the reaction tRNA(Leu) + L-leucine + ATP = L-leucyl-tRNA(Leu) + AMP + diphosphate. The sequence is that of Leucine--tRNA ligase from Chlamydia felis (strain Fe/C-56) (Chlamydophila felis).